A 254-amino-acid chain; its full sequence is Zinc import ATP-binding protein ZnuC (254 aa).

An ABC transporter domain is found at 5–221 (ICAADLSVSH…PAYRALFGSE (217 aa)). 38–45 (GPNGSGKS) lines the ATP pocket. Residues 234–245 (DHDHDHVAEGHR) are compositionally biased toward basic and acidic residues. The segment at 234-254 (DHDHDHVAEGHRHGPACAHPH) is disordered.

It belongs to the ABC transporter superfamily. Zinc importer (TC 3.A.1.15.5) family. In terms of assembly, the complex is composed of two ATP-binding proteins (ZnuC), two transmembrane proteins (ZnuB) and a solute-binding protein (ZnuA).

The protein localises to the cell inner membrane. The enzyme catalyses Zn(2+)(out) + ATP(in) + H2O(in) = Zn(2+)(in) + ADP(in) + phosphate(in) + H(+)(in). Part of the ABC transporter complex ZnuABC involved in zinc import. Responsible for energy coupling to the transport system. The sequence is that of Zinc import ATP-binding protein ZnuC from Paracoccus denitrificans (strain Pd 1222).